The chain runs to 422 residues: Enolase (422 aa).

Gln-162 is a (2R)-2-phosphoglycerate binding site. The active-site Proton donor is Glu-204. Residues Asp-241, Glu-284, and Asp-311 each contribute to the Mg(2+) site. 4 residues coordinate (2R)-2-phosphoglycerate: Lys-336, Arg-365, Ser-366, and Lys-387. Lys-336 functions as the Proton acceptor in the catalytic mechanism.

This sequence belongs to the enolase family. Mg(2+) is required as a cofactor.

Its subcellular location is the cytoplasm. The protein resides in the secreted. It localises to the cell surface. The catalysed reaction is (2R)-2-phosphoglycerate = phosphoenolpyruvate + H2O. It participates in carbohydrate degradation; glycolysis; pyruvate from D-glyceraldehyde 3-phosphate: step 4/5. Its function is as follows. Catalyzes the reversible conversion of 2-phosphoglycerate (2-PG) into phosphoenolpyruvate (PEP). It is essential for the degradation of carbohydrates via glycolysis. This is Enolase from Bartonella quintana (strain Toulouse) (Rochalimaea quintana).